The sequence spans 96 residues: Co-chaperonin GroES (96 aa).

Belongs to the GroES chaperonin family. As to quaternary structure, heptamer of 7 subunits arranged in a ring. Interacts with the chaperonin GroEL.

It is found in the cytoplasm. Its function is as follows. Together with the chaperonin GroEL, plays an essential role in assisting protein folding. The GroEL-GroES system forms a nano-cage that allows encapsulation of the non-native substrate proteins and provides a physical environment optimized to promote and accelerate protein folding. GroES binds to the apical surface of the GroEL ring, thereby capping the opening of the GroEL channel. This is Co-chaperonin GroES from Thioalkalivibrio sulfidiphilus (strain HL-EbGR7).